We begin with the raw amino-acid sequence, 29 residues long: Toxin Bcg III 15.67 (29 aa).

Residues 2–29 (QGTACTGEHAHSFCLNGGTCRHIQQLGE) enclose the EGF-like domain. An intrachain disulfide couples C6 to C21.

The protein localises to the secreted. Its subcellular location is the nematocyst. In terms of biological role, has both toxic and EGF activity. The protein is Toxin Bcg III 15.67 of Bunodosoma cangicum (Sea anemone).